Here is a 416-residue protein sequence, read N- to C-terminus: Phosphoglycerate kinase (416 aa).

14 residues coordinate (2R)-3-phosphoglycerate: V23, D24, F25, N26, Q38, R39, S62, H63, G65, R66, L121, R122, H168, and R169. G212 lines the ADP pocket. Residue G212 participates in CDP binding. AMP-binding residues include A213 and K214. A213 contributes to the ATP binding site. Residue A213 coordinates Mg(2+). D217 lines the CDP pocket. D217 serves as a coordination point for Mg(2+). K218 contributes to the AMP binding site. K218 is a binding site for ATP. An ADP-binding site is contributed by G236. G236 serves as a coordination point for CDP. Residues G237 and G311 each contribute to the AMP site. Residues G237 and G311 each contribute to the ATP site. Residues G336 and F341 each coordinate CDP. F341 lines the ADP pocket. Residue E342 participates in AMP binding. ATP contacts are provided by E342, D373, and T374. A Mg(2+)-binding site is contributed by D373.

It belongs to the phosphoglycerate kinase family. Monomer. Mg(2+) is required as a cofactor.

It is found in the cytoplasm. The protein localises to the mitochondrion. The catalysed reaction is (2R)-3-phosphoglycerate + ATP = (2R)-3-phospho-glyceroyl phosphate + ADP. It functions in the pathway carbohydrate degradation; glycolysis; pyruvate from D-glyceraldehyde 3-phosphate: step 2/5. In terms of biological role, catalyzes one of the two ATP producing reactions in the glycolytic pathway via the reversible conversion of 1,3-diphosphoglycerate to 3-phosphoglycerate. Both L- and D- forms of purine and pyrimidine nucleotides can be used as substrates, but the activity is much lower on pyrimidines. Negatively regulates the biosynthesis of acetyl-CoA from pyruvate in the mitochondrion. This Debaryomyces hansenii (strain ATCC 36239 / CBS 767 / BCRC 21394 / JCM 1990 / NBRC 0083 / IGC 2968) (Yeast) protein is Phosphoglycerate kinase (PGK1).